A 538-amino-acid chain; its full sequence is Putative cysteine ligase BshC (538 aa).

Positions 460-484 (KINEQIELLERMLKRNVEKKHEVEL) form a coiled coil.

It belongs to the BshC family.

Its function is as follows. Involved in bacillithiol (BSH) biosynthesis. May catalyze the last step of the pathway, the addition of cysteine to glucosamine malate (GlcN-Mal) to generate BSH. The chain is Putative cysteine ligase BshC from Bacillus anthracis (strain A0248).